Consider the following 231-residue polypeptide: Ion-translocating oxidoreductase complex subunit E (231 aa).

6 helical membrane passes run 18 to 38 (ALVQ…ATNA), 39 to 59 (LGLG…ISTL), 63 to 83 (TPAE…VSAV), 86 to 106 (LINA…PLIV), 125 to 145 (ALSA…MFVL), and 182 to 202 (PFLL…MLAG).

This sequence belongs to the NqrDE/RnfAE family. In terms of assembly, the complex is composed of six subunits: RsxA, RsxB, RsxC, RsxD, RsxE and RsxG.

The protein localises to the cell inner membrane. In terms of biological role, part of a membrane-bound complex that couples electron transfer with translocation of ions across the membrane. Required to maintain the reduced state of SoxR. The protein is Ion-translocating oxidoreductase complex subunit E of Escherichia coli O6:H1 (strain CFT073 / ATCC 700928 / UPEC).